Consider the following 456-residue polypeptide: Kynurenine 3-monooxygenase (456 aa).

This sequence belongs to the aromatic-ring hydroxylase family. KMO subfamily. Requires FAD as cofactor.

It carries out the reaction L-kynurenine + NADPH + O2 + H(+) = 3-hydroxy-L-kynurenine + NADP(+) + H2O. It participates in cofactor biosynthesis; NAD(+) biosynthesis; quinolinate from L-kynurenine: step 1/3. Catalyzes the hydroxylation of L-kynurenine (L-Kyn) to form 3-hydroxy-L-kynurenine (L-3OHKyn). Required for synthesis of quinolinic acid. In Xanthomonas campestris pv. campestris (strain 8004), this protein is Kynurenine 3-monooxygenase.